A 135-amino-acid polypeptide reads, in one-letter code: Large ribosomal subunit protein uL16c (135 aa).

It belongs to the universal ribosomal protein uL16 family. In terms of assembly, part of the 50S ribosomal subunit.

It is found in the plastid. The protein resides in the chloroplast. The protein is Large ribosomal subunit protein uL16c of Oenothera argillicola (Appalachian evening primrose).